The primary structure comprises 235 residues: Purine nucleoside phosphorylase DeoD-type (235 aa).

His4 is an a purine D-ribonucleoside binding site. Phosphate is bound by residues Gly20, Arg24, Arg43, and 87–90 (RVGT). A purine D-ribonucleoside contacts are provided by residues 179-181 (EME) and 203-204 (SD). Catalysis depends on Asp204, which acts as the Proton donor.

The protein belongs to the PNP/UDP phosphorylase family. Homohexamer; trimer of homodimers.

It catalyses the reaction a purine D-ribonucleoside + phosphate = a purine nucleobase + alpha-D-ribose 1-phosphate. The enzyme catalyses a purine 2'-deoxy-D-ribonucleoside + phosphate = a purine nucleobase + 2-deoxy-alpha-D-ribose 1-phosphate. Catalyzes the reversible phosphorolytic breakdown of the N-glycosidic bond in the beta-(deoxy)ribonucleoside molecules, with the formation of the corresponding free purine bases and pentose-1-phosphate. This Brevibacillus brevis (strain 47 / JCM 6285 / NBRC 100599) protein is Purine nucleoside phosphorylase DeoD-type.